The primary structure comprises 1196 residues: MNQLTGQLVQYGRHRQRRSYARISEVLELPNLIEIQTSSYQWFLDEGLREMFQDISPIEDFTGNLSLEFIDYSLGDPKYPVEESKERDVTYSAPLRVKVRLINKETGEVKDQDVFMGDFPIMTDTGTFIINGAERVIVSQLVRSPSVYFSGKVDKNGKKGFTATVIPNRGAWLEYETDAKDVVYVRIDRTRKLPVTVLLRALGFGSDQEILDLIGENEYLRNTLDKDNTENSDKALLEIYERLRPGEPPTVENAKSLLDSRFFDPKRYDLANVGRYKINKKLHIKNRLFNQRLAETLVDPETGEILAEKGQILDRRTLDKVLPYLENGIGFRKLYPNGGVVEDEVMLQSIKIYAPTDAEGEQTINVIGNAYIEEAIKNITPADIISSISYFFNLLHGVGDTDDIDHLGNRRLRSVGELLQNQFRIGLSRMERVVRERMSIQDTNTITPQQLINIRPVIASIKEFFGSSQLSQFMDQTNPLAELTHKRRLSALGPGGLTRERAGMEVRDVHYSHYGRMCPIETPEGPNIGLINSLSSFAKVNRFGFIETPYRRVDPETGKVTPRIDYLTADEEDNYVVAQANAKLSDDGSFLDDSIVARFRGENTVVARNRVDYMDVSPKQVVSAATACIPFLENDDSNRALMGANMQRQAVPLMQPEAPIVGTGMEYVSGKDSGAAVICKHPGIVERVEAKNVWVRRYEEIDGQKVKGNLDKYSLLKFVRSNQGTCYNQRPIVSVGDEVVKGEILADGPSMELGELALGRNVMVGFMTWDGYNYEDAIIMSERLVKDDVYTSIHIEEYESEARDTKLGPEEITRDIPNVGEDALRNLDDRGIIRIGAEVNDGDLLVGKVTPKGVTELTAEERLLHAIFGEKAREVRDTSLRVPHGGGGIIHDVKVFNREDGDELPPGVNQLVRVYIVQKRKISEGDKMAGRHGNKGVISKILPEEDMPYLPDGTPIDIMLNPLGVPSRMNIGQVLELHMGMAARYLGIHIASPVFDGAREEDVWETLEEAGMSRDAKTVLYDGRTGEPFDNRVSVGIMYMIKLAHMVDDKLHARSTGPYSLVTQQPLGGKAQFGGQRFGEMEVWALEAYGAAYTLQEILTVKSDDVVGRVKTYEAIVKGDNVPEPGVPESFKVLIKELQSLGMDVKILSGDEEEIEMRDLEDEEDAKQADGLALSGDEAPEETASPDVERDAVTKE.

Positions 1152–1165 (EEEIEMRDLEDEED) are enriched in acidic residues. The interval 1152-1196 (EEEIEMRDLEDEEDAKQADGLALSGDEAPEETASPDVERDAVTKE) is disordered. Basic and acidic residues predominate over residues 1187-1196 (DVERDAVTKE).

Belongs to the RNA polymerase beta chain family. In terms of assembly, the RNAP catalytic core consists of 2 alpha, 1 beta, 1 beta' and 1 omega subunit. When a sigma factor is associated with the core the holoenzyme is formed, which can initiate transcription.

It catalyses the reaction RNA(n) + a ribonucleoside 5'-triphosphate = RNA(n+1) + diphosphate. DNA-dependent RNA polymerase catalyzes the transcription of DNA into RNA using the four ribonucleoside triphosphates as substrates. In Bacillus velezensis (strain DSM 23117 / BGSC 10A6 / LMG 26770 / FZB42) (Bacillus amyloliquefaciens subsp. plantarum), this protein is DNA-directed RNA polymerase subunit beta.